The chain runs to 122 residues: Large ribosomal subunit protein uL14c (122 aa).

It belongs to the universal ribosomal protein uL14 family. Part of the 50S ribosomal subunit.

The protein localises to the plastid. It localises to the chloroplast. Its function is as follows. Binds to 23S rRNA. The protein is Large ribosomal subunit protein uL14c of Chloranthus spicatus (Chulantree).